Here is a 233-residue protein sequence, read N- to C-terminus: Lipoprotein-releasing system ATP-binding protein LolD (233 aa).

One can recognise an ABC transporter domain in the interval L6–E233. G42–S49 provides a ligand contact to ATP.

It belongs to the ABC transporter superfamily. Lipoprotein translocase (TC 3.A.1.125) family. As to quaternary structure, the complex is composed of two ATP-binding proteins (LolD) and two transmembrane proteins (LolC and LolE).

Its subcellular location is the cell inner membrane. Part of the ABC transporter complex LolCDE involved in the translocation of mature outer membrane-directed lipoproteins, from the inner membrane to the periplasmic chaperone, LolA. Responsible for the formation of the LolA-lipoprotein complex in an ATP-dependent manner. The polypeptide is Lipoprotein-releasing system ATP-binding protein LolD (Shigella flexneri).